The sequence spans 308 residues: NADH-cytochrome b5 reductase 1 (308 aa).

The chain crosses the membrane as a helical span at residues 10 to 27; sequence INGVYIPSALLIFGTTII. The FAD-binding FR-type domain maps to 59 to 164; that stretch reads TEFQNFVLKD…RGPKGAMVYT (106 aa). Residues 144-159 and 170-207 each bind FAD; these read TTLR…GPKG and HIGM…QIDL.

The protein belongs to the flavoprotein pyridine nucleotide cytochrome reductase family. Monomer. Component of the 2-(3-amino-3-carboxypropyl)histidine synthase complex composed of DPH1, DPH2, DPH3 and a NADH-dependent reductase, predominantly CBR1. It depends on FAD as a cofactor.

It is found in the mitochondrion outer membrane. The catalysed reaction is 2 Fe(III)-[cytochrome b5] + NADH = 2 Fe(II)-[cytochrome b5] + NAD(+) + H(+). It catalyses the reaction 2 Fe(3+)-[Dph3] + NADH = 2 Fe(2+)-[Dph3] + NAD(+) + H(+). The protein operates within protein modification; peptidyl-diphthamide biosynthesis. NADH-dependent reductase for DPH3 and cytochrome b5. Required for the first step of diphthamide biosynthesis, a post-translational modification of histidine which occurs in elongation factor 2. DPH1 and DPH2 transfer a 3-amino-3-carboxypropyl (ACP) group from S-adenosyl-L-methionine (SAM) to a histidine residue, the reaction is assisted by a reduction system comprising DPH3 and a NADH-dependent reductase, predominantly CBR1. By reducing DPH3, also involved in the formation of the tRNA wobble base modification mcm5s 2U (5-methoxycarbonylmethyl-2-thiouridine), mediated by the elongator complex. The cytochrome b5/NADH cytochrome b5 reductase electron transfer system supports the catalytic activity of several sterol biosynthetic enzymes. The polypeptide is NADH-cytochrome b5 reductase 1 (CBR1) (Coccidioides immitis (strain RS) (Valley fever fungus)).